The sequence spans 84 residues: Large ribosomal subunit protein bL27 (84 aa).

Residues 1-21 (MAHKKGASSTRNGRDSNAQRL) form a disordered region. Positions 7–19 (ASSTRNGRDSNAQ) are enriched in polar residues.

This sequence belongs to the bacterial ribosomal protein bL27 family.

The chain is Large ribosomal subunit protein bL27 from Clavibacter sepedonicus (Clavibacter michiganensis subsp. sepedonicus).